The following is a 1336-amino-acid chain: Coiled-coil and C2 domain-containing protein 2A (1336 aa).

Disordered regions lie at residues 1 to 29 (MEAA…EQEV) and 70 to 97 (VEDC…QTFI). A compositionally biased stretch (basic residues) spans 8-23 (KTAKKKRKTHTTRGYR). The segment covering 70–89 (VEDCQESDEDSGGELAEEPT) has biased composition (acidic residues). Positions 136–156 (LSDLSELKDSQIRMLNRYQEQ) form a coiled coil. Residues 755 to 915 (PREPSGWSGH…LASRTFEGCI (161 aa)) form the C2 domain.

In terms of assembly, probable component of the tectonic-like complex (also named MKS complex), composed of B9d1, B9d2, Cc2d2a, Mks1 and tctn. In terms of tissue distribution, expressed in the antennae of chordotonal neurons and male germ cells (at protein level).

The protein resides in the cytoplasm. Its subcellular location is the cytoskeleton. The protein localises to the cilium basal body. It localises to the microtubule organizing center. It is found in the centrosome. The protein resides in the centriole. Its function is as follows. Probable component of the tectonic-like complex (also named MKS complex), a complex localized at the transition zone of primary cilia. Required for ciliary structure and function. In Drosophila melanogaster (Fruit fly), this protein is Coiled-coil and C2 domain-containing protein 2A.